The sequence spans 591 residues: UvrABC system protein C (591 aa).

Positions 14–91 constitute a GIY-YIG domain; it reads DSPGCYLHKD…IQKNMPKYNI (78 aa). In terms of domain architecture, UVR spans 196–231; the sequence is DKIVTGLKEKMLAASQAMEFERAAEYRDLISGIATL.

The protein belongs to the UvrC family. Interacts with UvrB in an incision complex.

Its subcellular location is the cytoplasm. In terms of biological role, the UvrABC repair system catalyzes the recognition and processing of DNA lesions. UvrC both incises the 5' and 3' sides of the lesion. The N-terminal half is responsible for the 3' incision and the C-terminal half is responsible for the 5' incision. This chain is UvrABC system protein C, found in Streptococcus uberis (strain ATCC BAA-854 / 0140J).